The following is a 436-amino-acid chain: 5-methylthioadenosine/S-adenosylhomocysteine deaminase (436 aa).

The Zn(2+) site is built by His66 and His68. Substrate-binding residues include Glu95, Arg147, Arg161, and His187. His214 is a Zn(2+) binding site. Substrate contacts are provided by Glu217 and Asp303. Asp303 contributes to the Zn(2+) binding site.

This sequence belongs to the metallo-dependent hydrolases superfamily. MTA/SAH deaminase family. Zn(2+) serves as cofactor.

The enzyme catalyses S-adenosyl-L-homocysteine + H2O + H(+) = S-inosyl-L-homocysteine + NH4(+). It catalyses the reaction S-methyl-5'-thioadenosine + H2O + H(+) = S-methyl-5'-thioinosine + NH4(+). Functionally, catalyzes the deamination of 5-methylthioadenosine and S-adenosyl-L-homocysteine into 5-methylthioinosine and S-inosyl-L-homocysteine, respectively. Is also able to deaminate adenosine. This Symbiobacterium thermophilum (strain DSM 24528 / JCM 14929 / IAM 14863 / T) protein is 5-methylthioadenosine/S-adenosylhomocysteine deaminase.